Consider the following 292-residue polypeptide: Siderophore triacetylfusarinine C esterase (292 aa).

Residues Arg-97, Ser-148, Tyr-149, Ser-174, Trp-176, and His-267 each contribute to the triacetylfusarinine C site.

It belongs to the esterase D family.

The protein localises to the cytoplasm. The catalysed reaction is triacetylfusarinine C + 3 H2O = 3 N-acetylfusarinine + Fe(3+). Its function is as follows. Displays specific triacetylfusarinine C (TAFC) esterase activity but does not hydrolyze fusarinine C, which has the same core structure as TAFC. Hydrolysis optimizes but is not essential for TAFC-mediated iron uptake. Both extra- and intracellular siderophores have been shown to be crucial for the virulence. Subsequent to chelation of iron and uptake, FsC and TAFC are hydrolyzed and the iron is transferred to the metabolism or to the intracellular siderophore ferricrocin (FC) for transport and storage of iron. Hydrolyzes both TAFC and DF-TAFC with equal efficiencies, suggesting that its function might not be restricted to the release of iron from the siderophore but might also include the degradation of the iron-free chelator to protect cells. The sequence is that of Siderophore triacetylfusarinine C esterase from Aspergillus fumigatus (strain ATCC MYA-4609 / CBS 101355 / FGSC A1100 / Af293) (Neosartorya fumigata).